The chain runs to 452 residues: Probable dihydrolipoyllysine-residue succinyltransferase component of 2-oxoglutarate dehydrogenase complex, mitochondrial (452 aa).

Positions 42 to 117 (STRIKTPPFP…TIDQDIAVID (76 aa)) constitute a Lipoyl-binding domain. At Lys-83 the chain carries N6-lipoyllysine. The interval 119 to 225 (SAAPPEGGSA…FSRNEDRVKM (107 aa)) is disordered. Composition is skewed to basic and acidic residues over residues 130 to 144 (PKKDEVKTADADAAK), 154 to 170 (KPIEEKPMPDLGAEQKE), and 195 to 209 (AKSEPVKQSKPKATE). Residues His-424 and Asp-428 contribute to the active site.

This sequence belongs to the 2-oxoacid dehydrogenase family. Requires (R)-lipoate as cofactor.

It is found in the mitochondrion. The enzyme catalyses N(6)-[(R)-dihydrolipoyl]-L-lysyl-[protein] + succinyl-CoA = N(6)-[(R)-S(8)-succinyldihydrolipoyl]-L-lysyl-[protein] + CoA. The protein operates within amino-acid degradation; L-lysine degradation via saccharopine pathway; glutaryl-CoA from L-lysine: step 6/6. In terms of biological role, the 2-oxoglutarate dehydrogenase complex catalyzes the overall conversion of 2-oxoglutarate to succinyl-CoA and CO(2). It contains multiple copies of three enzymatic components: 2-oxoglutarate dehydrogenase (E1), dihydrolipoamide succinyltransferase (E2) and lipoamide dehydrogenase (E3). This Schizosaccharomyces pombe (strain 972 / ATCC 24843) (Fission yeast) protein is Probable dihydrolipoyllysine-residue succinyltransferase component of 2-oxoglutarate dehydrogenase complex, mitochondrial (kgd2).